We begin with the raw amino-acid sequence, 312 residues long: Glyoxylate/hydroxypyruvate reductase A (312 aa).

Residue Arg-227 is part of the active site. Residue His-275 is the Proton donor of the active site.

Belongs to the D-isomer specific 2-hydroxyacid dehydrogenase family. GhrA subfamily.

It localises to the cytoplasm. It catalyses the reaction glycolate + NADP(+) = glyoxylate + NADPH + H(+). It carries out the reaction (R)-glycerate + NAD(+) = 3-hydroxypyruvate + NADH + H(+). The enzyme catalyses (R)-glycerate + NADP(+) = 3-hydroxypyruvate + NADPH + H(+). In terms of biological role, catalyzes the NADPH-dependent reduction of glyoxylate and hydroxypyruvate into glycolate and glycerate, respectively. The protein is Glyoxylate/hydroxypyruvate reductase A of Escherichia coli O7:K1 (strain IAI39 / ExPEC).